Reading from the N-terminus, the 348-residue chain is tRNA pseudouridine synthase D (348 aa).

Asp84 acts as the Nucleophile in catalysis. The 147-residue stretch at 162–308 folds into the TRUD domain; that stretch reads GVPNYFGPQR…ARMDRRPLCL (147 aa).

Belongs to the pseudouridine synthase TruD family.

It catalyses the reaction uridine(13) in tRNA = pseudouridine(13) in tRNA. Responsible for synthesis of pseudouridine from uracil-13 in transfer RNAs. This chain is tRNA pseudouridine synthase D, found in Chromohalobacter salexigens (strain ATCC BAA-138 / DSM 3043 / CIP 106854 / NCIMB 13768 / 1H11).